We begin with the raw amino-acid sequence, 341 residues long: Ketol-acid reductoisomerase (NADP(+)) (341 aa).

Residues 1–182 (MTELFYDDDA…GGTRAGVIKT (182 aa)) form the KARI N-terminal Rossmann domain. Residues 25–28 (YGSQ), S51, S53, and 83–86 (DQVQ) each bind NADP(+). H108 is an active-site residue. NADP(+) is bound at residue G134. Positions 183 to 328 (TFTEETETDL…RELRKLFSWI (146 aa)) constitute a KARI C-terminal knotted domain. D191, E195, E227, and E231 together coordinate Mg(2+). S252 is a substrate binding site.

This sequence belongs to the ketol-acid reductoisomerase family. It depends on Mg(2+) as a cofactor.

The catalysed reaction is (2R)-2,3-dihydroxy-3-methylbutanoate + NADP(+) = (2S)-2-acetolactate + NADPH + H(+). It carries out the reaction (2R,3R)-2,3-dihydroxy-3-methylpentanoate + NADP(+) = (S)-2-ethyl-2-hydroxy-3-oxobutanoate + NADPH + H(+). Its pathway is amino-acid biosynthesis; L-isoleucine biosynthesis; L-isoleucine from 2-oxobutanoate: step 2/4. The protein operates within amino-acid biosynthesis; L-valine biosynthesis; L-valine from pyruvate: step 2/4. Its function is as follows. Involved in the biosynthesis of branched-chain amino acids (BCAA). Catalyzes an alkyl-migration followed by a ketol-acid reduction of (S)-2-acetolactate (S2AL) to yield (R)-2,3-dihydroxy-isovalerate. In the isomerase reaction, S2AL is rearranged via a Mg-dependent methyl migration to produce 3-hydroxy-3-methyl-2-ketobutyrate (HMKB). In the reductase reaction, this 2-ketoacid undergoes a metal-dependent reduction by NADPH to yield (R)-2,3-dihydroxy-isovalerate. This Renibacterium salmoninarum (strain ATCC 33209 / DSM 20767 / JCM 11484 / NBRC 15589 / NCIMB 2235) protein is Ketol-acid reductoisomerase (NADP(+)).